We begin with the raw amino-acid sequence, 560 residues long: Kinesin light chain 1 (560 aa).

Residues Val31 to Val99 are a coiled coil. Residues Lys155–Leu176 are compositionally biased toward basic and acidic residues. Residues Lys155–Gln203 are disordered. At Ser162 the chain carries Phosphoserine. Positions Gln192–Gln203 are enriched in low complexity. TPR repeat units follow at residues Leu213–Thr246, Ala255–Thr288, Ala297–Val330, Ala339–Lys372, and Ala381–Arg414. Phosphotyrosine is present on Tyr449. Ser460 is modified (phosphoserine). Residues Thr464 to Gly497 form a TPR 6 repeat. Residues Ser521 and Ser524 each carry the phosphoserine; by AMPK modification.

The protein belongs to the kinesin light chain family. Oligomeric complex composed of two heavy chains and two light chains. Interacts with SPAG9. Interacts with ATCAY; may link mitochondria to KLC1 and regulate mitochondria localization into neuron projections. Interacts (via TPR repeats) with TOR1A; the interaction associates TOR1A with the kinesin oligomeric complex. Interacts with BORCS5. Interacts with MAPK8IP3/JIP3 and NTRK2/TRKB; interaction with NTRK2/TRKB is mediated by MAPK8IP3/JIP3. Interacts with CLSTN1; phosphorylation at Ser-460 inhibits interaction with CLSTN1. In terms of processing, phosphorylation at Ser-460 by ERK inhibits interaction with CLSTN1 and localization to cytoplasmic vesicles.

The protein resides in the cell projection. It localises to the growth cone. The protein localises to the cytoplasmic vesicle. It is found in the cytoplasm. Its subcellular location is the cytoskeleton. Its function is as follows. Kinesin is a microtubule-associated force-producing protein that may play a role in organelle transport. The light chain may function in coupling of cargo to the heavy chain or in the modulation of its ATPase activity. The chain is Kinesin light chain 1 (KLC1) from Pongo abelii (Sumatran orangutan).